A 68-amino-acid polypeptide reads, in one-letter code: Sec-independent protein translocase protein TatA (68 aa).

Residues 1–21 (MGSFSIWHWLIVLVVVLLLFG) traverse the membrane as a helical segment. The tract at residues 46–68 (EEAASADKTIDGKTVEHKSDEVR) is disordered. The span at 53-68 (KTIDGKTVEHKSDEVR) shows a compositional bias: basic and acidic residues.

The protein belongs to the TatA/E family. The Tat system comprises two distinct complexes: a TatABC complex, containing multiple copies of TatA, TatB and TatC subunits, and a separate TatA complex, containing only TatA subunits. Substrates initially bind to the TatABC complex, which probably triggers association of the separate TatA complex to form the active translocon.

Its subcellular location is the cell inner membrane. Functionally, part of the twin-arginine translocation (Tat) system that transports large folded proteins containing a characteristic twin-arginine motif in their signal peptide across membranes. TatA could form the protein-conducting channel of the Tat system. The sequence is that of Sec-independent protein translocase protein TatA from Sinorhizobium fredii (strain NBRC 101917 / NGR234).